The primary structure comprises 325 residues: Fe-S cluster assembly protein DRE2 (325 aa).

The N-terminal SAM-like domain stretch occupies residues 1-169 (MTLGDRLGLI…KKKDAGNNEQ (169 aa)). Positions 170-222 (VVKLSVEDVEDDLDDDPEVSNELLSKAKFFNSLSLNQDAEIDENNLIKSTDGD) are linker. [2Fe-2S] cluster is bound by residues Cys229, Cys240, Cys243, and Cys245. Positions 229–245 (CGKTNTKKRRACKDCTC) are fe-S binding site A. Residues Cys288, Cys291, Cys299, and Cys302 each coordinate [4Fe-4S] cluster. Short sequence motifs (cx2C motif) lie at residues 288 to 291 (CGSC) and 299 to 302 (CSGC). A fe-S binding site B region spans residues 288–302 (CGSCSLGDAFRCSGC).

This sequence belongs to the anamorsin family. Monomer. Interacts with TAH18. Interacts with MIA40. It depends on [2Fe-2S] cluster as a cofactor. The cofactor is [4Fe-4S] cluster.

The protein resides in the cytoplasm. The protein localises to the mitochondrion intermembrane space. In terms of biological role, component of the cytosolic iron-sulfur (Fe-S) protein assembly (CIA) machinery required for the maturation of extramitochondrial Fe-S proteins. Part of an electron transfer chain functioning in an early step of cytosolic Fe-S biogenesis, facilitating the de novo assembly of a [4Fe-4S] cluster on the scaffold complex CFD1-NBP35. Electrons are transferred to DRE2 from NADPH via the FAD- and FMN-containing protein TAH18. TAH18-DRE2 are also required for the assembly of the diferric tyrosyl radical cofactor of ribonucleotide reductase (RNR), probably by providing electrons for reduction during radical cofactor maturation in the catalytic small subunit RNR2. This Vanderwaltozyma polyspora (strain ATCC 22028 / DSM 70294 / BCRC 21397 / CBS 2163 / NBRC 10782 / NRRL Y-8283 / UCD 57-17) (Kluyveromyces polysporus) protein is Fe-S cluster assembly protein DRE2.